We begin with the raw amino-acid sequence, 613 residues long: Portal protein (613 aa).

Residues 577-613 (ATGGDHGIRQAPSARGDAEPDHAKSKPARDPPPGAGS) are disordered. Positions 592–605 (GDAEPDHAKSKPAR) are enriched in basic and acidic residues.

This sequence belongs to the herpesviridae portal protein family. In terms of assembly, homododecamerizes. Interacts with terminase subunits TRM1 and TRM3.

Its subcellular location is the virion. The protein resides in the host nucleus. Its function is as follows. Forms a portal in the viral capsid through which viral DNA is translocated during DNA packaging. Assembles as a dodecamer at a single fivefold axe of the T=16 icosahedric capsid. Binds to the molecular motor that translocates the viral DNA, termed terminase. This is Portal protein from Homo sapiens (Human).